We begin with the raw amino-acid sequence, 86 residues long: Small ribosomal subunit protein bS20 (86 aa).

Residues 1-27 show a composition bias toward basic residues; the sequence is MANSKSAKKRATQAERRRQHNASRRSM. Residues 1 to 28 are disordered; it reads MANSKSAKKRATQAERRRQHNASRRSMM.

This sequence belongs to the bacterial ribosomal protein bS20 family.

In terms of biological role, binds directly to 16S ribosomal RNA. This is Small ribosomal subunit protein bS20 from Aliivibrio salmonicida (strain LFI1238) (Vibrio salmonicida (strain LFI1238)).